We begin with the raw amino-acid sequence, 1219 residues long: Myosin-5 (1219 aa).

The segment covering 1 to 12 has biased composition (basic residues); it reads MAILKRGARKKV. A disordered region spans residues 1-20; sequence MAILKRGARKKVHQEPAKRS. The 680-residue stretch at 36–715 folds into the Myosin motor domain; it reads VGVSDLTLLS…TLFALEHMRD (680 aa). 129-136 contributes to the ATP binding site; that stretch reads GESGAGKT. A Phosphoserine modification is found at Ser357. Tyr359 bears the Phosphotyrosine mark. Residues 404–486 form an actin-binding region; sequence SIGILDIYGF…PGIFAAMNDS (83 aa). IQ domains follow at residues 719-739 and 740-765; these read HNMA…RIDA and ATKI…YGTK. A TH1 domain is found at 771–961; it reads KERRSMSLLG…TISVRRGNPP (191 aa). Ser777 carries the phosphoserine modification. Residues 951–964 are compositionally biased toward polar residues; it reads STISVRRGNPPNSQ. 2 disordered regions span residues 951–1106 and 1139–1167; these read STIS…SELP and TAYM…VLNS. Positions 974–984 are enriched in low complexity; the sequence is SISSGYHASSS. Ser992 carries the phosphoserine modification. A compositionally biased stretch (polar residues) spans 1030–1041; the sequence is NPASTLTASQSN. The segment covering 1048 to 1063 has biased composition (low complexity); sequence TAATRATPAATPAAAA. Residues 1072–1083 are compositionally biased toward pro residues; it reads IPPPPPPPPPSS. The SH3 domain occupies 1085–1147; it reads PKEPMFEAAY…PTAYMKPHSG (63 aa). Ser1205 carries the phosphoserine modification.

This sequence belongs to the TRAFAC class myosin-kinesin ATPase superfamily. Myosin family. Interacts (via myosin motor domain) with SHE4; this interaction is important for proper localization and may regulate the interaction of the motor domain with actin. Interacts (via SH3 domain) with VRP1; this interaction is required for localization to sites of polarized growth and may regulate the interaction of the tail domain with actin. Interacts (via SH3 domain) with PAN1; this interaction is important for late stages of endocytopsis. Interacts (via SH3 domain) with BBC1 and LAS17. Interacts (via C-terminal acidic tail) with ARC19 and ARC40; ARC19 and ARC40 are Arp2/3 complex subunits. Interacts with BZZ1, PKH1, PKH2, YPK1 and YPK2. In terms of processing, phosphorylation of the TEDS site (Ser-357) is required for the polarization of the actin cytoskeleton and for ligand-induced, but not for constitutive internalization of STE2. Phosphorylation probably activates the myosin-I ATPase activity. Ser-357 is phosphorylated by YPK2 in vitro.

It is found in the cytoplasm. The protein localises to the cytoskeleton. Its subcellular location is the actin patch. Its function is as follows. One of two redundant type-I myosins implicated in the organization of the actin cytoskeleton. Required for proper actin cytoskeleton polarization and for the internalization step in endocytosis. At the cell cortex, assembles in patch-like structures together with proteins from the actin-polymerizing machinery and promotes actin assembly. Functions redundantly with LAS17 as actin nucleation-promoting factor (NPF) for the Arp2/3 complex. Motor domain phosphorylation by PAK kinases CLA4 and STE20 promotes CDC42-regulated actin assembly. Functions together with the NPF PAN1 in late stages of endocytosis. Motor domain phosphorylation by PDK1 kinases PKH1 and PKH2, and by SGK kinases YPK1 and YPK2, promotes ligand-induced, but not constitutive endocytosis of the G protein-coupled receptor STE2. In Saccharomyces cerevisiae (strain YJM789) (Baker's yeast), this protein is Myosin-5 (MYO5).